A 1222-amino-acid chain; its full sequence is ATP-dependent helicase/nuclease subunit A (1222 aa).

One can recognise a UvrD-like helicase ATP-binding domain in the interval Gln-39–Gln-495. Ala-60 to Thr-67 provides a ligand contact to ATP. The 287-residue stretch at Gln-524 to Gly-810 folds into the UvrD-like helicase C-terminal domain.

The protein belongs to the helicase family. AddA subfamily. In terms of assembly, heterodimer of AddA and AddB/RexB. The cofactor is Mg(2+).

It carries out the reaction Couples ATP hydrolysis with the unwinding of duplex DNA by translocating in the 3'-5' direction.. The enzyme catalyses ATP + H2O = ADP + phosphate + H(+). Its function is as follows. The heterodimer acts as both an ATP-dependent DNA helicase and an ATP-dependent, dual-direction single-stranded exonuclease. Recognizes the chi site generating a DNA molecule suitable for the initiation of homologous recombination. The AddA nuclease domain is required for chi fragment generation; this subunit has the helicase and 3' -&gt; 5' nuclease activities. The sequence is that of ATP-dependent helicase/nuclease subunit A from Streptococcus pyogenes serotype M6 (strain ATCC BAA-946 / MGAS10394).